The chain runs to 130 residues: Small ribosomal subunit protein uS11 (130 aa).

This sequence belongs to the universal ribosomal protein uS11 family. Part of the 30S ribosomal subunit. Interacts with proteins S7 and S18. Binds to IF-3.

In terms of biological role, located on the platform of the 30S subunit, it bridges several disparate RNA helices of the 16S rRNA. Forms part of the Shine-Dalgarno cleft in the 70S ribosome. The protein is Small ribosomal subunit protein uS11 of Psychrobacter sp. (strain PRwf-1).